The primary structure comprises 277 residues: Shikimate dehydrogenase (NADP(+)) (277 aa).

Residues 15–17 (SLS) and Thr-62 each bind shikimate. Residue Lys-66 is the Proton acceptor of the active site. Positions 87 and 102 each coordinate shikimate. Residues 127–131 (GSGGA), 151–156 (NRTVDK), and Ile-219 contribute to the NADP(+) site. Residue Tyr-221 coordinates shikimate. Residue Gly-242 participates in NADP(+) binding.

Belongs to the shikimate dehydrogenase family. In terms of assembly, homodimer.

The enzyme catalyses shikimate + NADP(+) = 3-dehydroshikimate + NADPH + H(+). The protein operates within metabolic intermediate biosynthesis; chorismate biosynthesis; chorismate from D-erythrose 4-phosphate and phosphoenolpyruvate: step 4/7. Its function is as follows. Involved in the biosynthesis of the chorismate, which leads to the biosynthesis of aromatic amino acids. Catalyzes the reversible NADPH linked reduction of 3-dehydroshikimate (DHSA) to yield shikimate (SA). The protein is Shikimate dehydrogenase (NADP(+)) of Bacillus cereus (strain B4264).